The primary structure comprises 157 residues: Protein EOLA1 (157 aa).

The ASCH domain occupies 6-92; that stretch reads LSFRQPYAGL…IAGLIDIGET (87 aa).

It belongs to the EOLA family. In terms of assembly, interacts with MT2A.

Functionally, may play a role in cell protection during the inflammatory response. In epithelial cells, negatively regulates IL6 production and apoptosis through the regulation of MT2A expression. This is Protein EOLA1 from Mus musculus (Mouse).